Consider the following 494-residue polypeptide: Cobyric acid synthase (494 aa).

Residues 248-444 (EIEIAIIKLP…LHGIFENDEW (197 aa)) form the GATase cobBQ-type domain. The active-site Nucleophile is C329. H436 is a catalytic residue.

This sequence belongs to the CobB/CobQ family. CobQ subfamily.

Its pathway is cofactor biosynthesis; adenosylcobalamin biosynthesis. In terms of biological role, catalyzes amidations at positions B, D, E, and G on adenosylcobyrinic A,C-diamide. NH(2) groups are provided by glutamine, and one molecule of ATP is hydrogenolyzed for each amidation. The protein is Cobyric acid synthase of Prochlorococcus marinus (strain NATL1A).